A 457-amino-acid polypeptide reads, in one-letter code: Tryptophan aminotransferase-related protein 3 (457 aa).

Residues 6–26 form a helical membrane-spanning segment; the sequence is LLIAGSIILNLVFTIHILYNN. Pyridoxal 5'-phosphate is bound by residues Tyr-123, 163–164, Asn-237, 257–260, 280–283, and Arg-291; these read AT, DYAY, and SLSK. An N6-(pyridoxal phosphate)lysine modification is found at Lys-283.

It belongs to the alliinase family. The cofactor is pyridoxal 5'-phosphate.

The protein resides in the membrane. Functionally, probable aminotransferase. In Arabidopsis thaliana (Mouse-ear cress), this protein is Tryptophan aminotransferase-related protein 3 (TAR3).